We begin with the raw amino-acid sequence, 460 residues long: Cysteine--tRNA ligase (460 aa).

Zn(2+) is bound at residue Cys29. The short motif at 31–41 (MTIYDLCHIGH) is the 'HIGH' region element. 3 residues coordinate Zn(2+): Cys213, His238, and Glu242. The 'KMSKS' region motif lies at 270–274 (KMSKS). Lys273 lines the ATP pocket.

It belongs to the class-I aminoacyl-tRNA synthetase family. In terms of assembly, monomer. Requires Zn(2+) as cofactor.

The protein localises to the cytoplasm. The enzyme catalyses tRNA(Cys) + L-cysteine + ATP = L-cysteinyl-tRNA(Cys) + AMP + diphosphate. The protein is Cysteine--tRNA ligase of Verminephrobacter eiseniae (strain EF01-2).